The sequence spans 346 residues: [LysW]-lysine/[LysW]-ornithine hydrolase (346 aa).

His-68 provides a ligand contact to Zn(2+). The active site involves Asp-70. Asp-92 contacts Zn(2+). The active-site Proton acceptor is Glu-122. Zn(2+)-binding residues include Glu-123, Glu-146, and His-317.

The protein belongs to the peptidase M20A family. LysK subfamily. The cofactor is Zn(2+). Co(2+) serves as cofactor.

It localises to the cytoplasm. The catalysed reaction is [amino-group carrier protein]-C-terminal-gamma-(L-lysyl)-L-glutamate + H2O = [amino-group carrier protein]-C-terminal-L-glutamate + L-lysine. The enzyme catalyses [amino-group carrier protein]-C-terminal-gamma-(L-ornithyl)-L-glutamate + H2O = [amino-group carrier protein]-C-terminal-L-glutamate + L-ornithine. It participates in amino-acid biosynthesis; L-lysine biosynthesis via AAA pathway; L-lysine from L-alpha-aminoadipate (Thermus route): step 5/5. Its pathway is amino-acid biosynthesis; L-arginine biosynthesis. Its function is as follows. Catalyzes the release of L-lysine from [LysW]-gamma-L-lysine and the release of L-ornithine from [LysW]-L-ornithine. The polypeptide is [LysW]-lysine/[LysW]-ornithine hydrolase (Saccharolobus islandicus (strain Y.N.15.51 / Yellowstone #2) (Sulfolobus islandicus)).